Consider the following 542-residue polypeptide: 1,3-beta-glucanosyltransferase gas1 (542 aa).

The first 19 residues, 1 to 19 (MKFSILSLAVAGLVGLAKA), serve as a signal peptide directing secretion. Asn-35 carries N-linked (GlcNAc...) asparagine glycosylation. A disulfide bridge connects residues Cys-70 and Cys-99. Tyr-88 is a binding site for (1,3-beta-D-glucosyl)n. N-linked (GlcNAc...) asparagine glycosylation is present at Asn-91. (1,3-beta-D-glucosyl)n is bound by residues Asn-156 and Glu-157. Glu-157 acts as the Proton donor in catalysis. The N-linked (GlcNAc...) asparagine glycan is linked to Asn-161. 2 residues coordinate (1,3-beta-D-glucosyl)n: Asp-198 and Arg-203. 5 disulfide bridges follow: Cys-212–Cys-345, Cys-230–Cys-261, Cys-367–Cys-419, Cys-376–Cys-439, and Cys-395–Cys-400. Asn-249 carries an N-linked (GlcNAc...) asparagine glycan. The active-site Nucleophile is the Glu-258. Asn-279 carries N-linked (GlcNAc...) asparagine glycosylation. Tyr-290 lines the (1,3-beta-D-glucosyl)n pocket. N-linked (GlcNAc...) asparagine glycans are attached at residues Asn-406, Asn-484, Asn-502, and Asn-509. Positions 490–515 (MSTSYTSGSGSSNSSGSSSNSSSKSS) are disordered. Residue Ser-516 is the site of GPI-anchor amidated serine attachment. Residues 517–542 (GASSYNLNMVITFLSVVIGGTAVLFI) constitute a propeptide, removed in mature form.

It belongs to the glycosyl hydrolase 72 family. Post-translationally, the GPI-anchor is attached to the protein in the endoplasmic reticulum and serves to target the protein to the cell surface. There, the glucosamine-inositol phospholipid moiety is cleaved off and the GPI-modified mannoprotein is covalently attached via its lipidless GPI glycan remnant to the 1,6-beta-glucan of the outer cell wall layer.

It localises to the secreted. It is found in the cell wall. The protein localises to the membrane. Splits internally a 1,3-beta-glucan molecule and transfers the newly generated reducing end (the donor) to the non-reducing end of another 1,3-beta-glucan molecule (the acceptor) forming a 1,3-beta linkage, resulting in the elongation of 1,3-beta-glucan chains in the cell wall. The chain is 1,3-beta-glucanosyltransferase gas1 (gas1) from Schizosaccharomyces pombe (strain 972 / ATCC 24843) (Fission yeast).